A 307-amino-acid polypeptide reads, in one-letter code: D-alanine--D-alanine ligase (307 aa).

Positions 105-304 (KMLWKGFGLP…FEQLVVKILE (200 aa)) constitute an ATP-grasp domain. 135–190 (VERLGLPLMVKPSREGSSVGLTKVNAVEELKNAVDLALTHDDTVLIEEWLSGIEMT) lines the ATP pocket. Mg(2+) is bound by residues Asp-258, Glu-271, and Asn-273.

Belongs to the D-alanine--D-alanine ligase family. The cofactor is Mg(2+). Requires Mn(2+) as cofactor.

Its subcellular location is the cytoplasm. It catalyses the reaction 2 D-alanine + ATP = D-alanyl-D-alanine + ADP + phosphate + H(+). It participates in cell wall biogenesis; peptidoglycan biosynthesis. Functionally, cell wall formation. The protein is D-alanine--D-alanine ligase of Mannheimia succiniciproducens (strain KCTC 0769BP / MBEL55E).